The following is a 450-amino-acid chain: Probable 1,4-beta-D-glucan cellobiohydrolase C (450 aa).

Residues 1-19 (MKHLASSIALTLLLPAVQA) form the signal peptide. In terms of domain architecture, CBM1 spans 20-55 (QQTVWGQCGGQGWSGPTNCVAGAACSTLNPYYAQCI). 2 disulfides stabilise this stretch: cysteine 27–cysteine 44 and cysteine 38–cysteine 54. The thr-rich linker stretch occupies residues 59-90 (TATSTTLSTTTTTQTTTKPTTTGPTTSAPTVT). The disordered stretch occupies residues 63 to 89 (TTLSTTTTTQTTTKPTTTGPTTSAPTV). Positions 91–450 (ASGNPFSGYQ…QLLTNANPSF (360 aa)) are catalytic. Aspartate 180 is an active-site residue. 2 disulfide bridges follow: cysteine 181–cysteine 240 and cysteine 372–cysteine 419. The Proton donor role is filled by aspartate 226. Catalysis depends on aspartate 405, which acts as the Nucleophile. Asparagine 409 is a glycosylation site (N-linked (GlcNAc...) asparagine).

The protein belongs to the glycosyl hydrolase 6 (cellulase B) family.

It localises to the secreted. The catalysed reaction is Hydrolysis of (1-&gt;4)-beta-D-glucosidic linkages in cellulose and cellotetraose, releasing cellobiose from the non-reducing ends of the chains.. The biological conversion of cellulose to glucose generally requires three types of hydrolytic enzymes: (1) Endoglucanases which cut internal beta-1,4-glucosidic bonds; (2) Exocellobiohydrolases that cut the disaccharide cellobiose from the non-reducing end of the cellulose polymer chain; (3) Beta-1,4-glucosidases which hydrolyze the cellobiose and other short cello-oligosaccharides to glucose. The polypeptide is Probable 1,4-beta-D-glucan cellobiohydrolase C (cbhC) (Neosartorya fischeri (strain ATCC 1020 / DSM 3700 / CBS 544.65 / FGSC A1164 / JCM 1740 / NRRL 181 / WB 181) (Aspergillus fischerianus)).